The primary structure comprises 260 residues: tRNA pseudouridine synthase A (260 aa).

The active-site Nucleophile is the D52. A substrate-binding site is contributed by Y110.

The protein belongs to the tRNA pseudouridine synthase TruA family. In terms of assembly, homodimer.

It carries out the reaction uridine(38/39/40) in tRNA = pseudouridine(38/39/40) in tRNA. Formation of pseudouridine at positions 38, 39 and 40 in the anticodon stem and loop of transfer RNAs. This chain is tRNA pseudouridine synthase A, found in Spiroplasma kunkelii.